A 28-amino-acid polypeptide reads, in one-letter code: Chaperonin GroEL (28 aa).

The protein belongs to the chaperonin (HSP60) family. Forms a cylinder of 14 subunits composed of two heptameric rings stacked back-to-back. Interacts with the co-chaperonin GroES.

The protein resides in the cytoplasm. It carries out the reaction ATP + H2O + a folded polypeptide = ADP + phosphate + an unfolded polypeptide.. Functionally, together with its co-chaperonin GroES, plays an essential role in assisting protein folding. The GroEL-GroES system forms a nano-cage that allows encapsulation of the non-native substrate proteins and provides a physical environment optimized to promote and accelerate protein folding. The protein is Chaperonin GroEL of Mycolicibacterium smegmatis (Mycobacterium smegmatis).